The sequence spans 326 residues: Zona pellucida-binding protein 2 (326 aa).

Positions 1 to 19 are cleaved as a signal peptide; it reads MLAWALLYAVLWSLAGVGS. N-linked (GlcNAc...) asparagine glycosylation is found at asparagine 86, asparagine 220, and asparagine 256.

It belongs to the zona pellucida-binding protein Sp38 family. N-glycosylated. Expressed specifically in male germ cells.

The protein resides in the cytoplasmic vesicle. The protein localises to the secretory vesicle. Its subcellular location is the acrosome. It localises to the secreted. In terms of biological role, is implicated in sperm-oocyte interaction during fertilization. This is Zona pellucida-binding protein 2 (Zpbp2) from Mus musculus (Mouse).